The following is a 303-amino-acid chain: Elongation factor Ts (303 aa).

The tract at residues 80 to 83 (TDFV) is involved in Mg(2+) ion dislocation from EF-Tu.

Belongs to the EF-Ts family.

The protein resides in the cytoplasm. Associates with the EF-Tu.GDP complex and induces the exchange of GDP to GTP. It remains bound to the aminoacyl-tRNA.EF-Tu.GTP complex up to the GTP hydrolysis stage on the ribosome. This Clostridium botulinum (strain Eklund 17B / Type B) protein is Elongation factor Ts.